The sequence spans 210 residues: Fimbriae Z protein (210 aa).

Residues Ser-5–Leu-121 enclose the Response regulatory domain. 4-aspartylphosphate is present on Asp-56. The HTH luxR-type domain occupies Asn-143 to Glu-208. The H-T-H motif DNA-binding region spans Asn-167–Ser-186.

The protein localises to the cytoplasm. The chain is Fimbriae Z protein (fimZ) from Escherichia coli O157:H7.